The sequence spans 640 residues: 1-deoxy-D-xylulose-5-phosphate synthase (640 aa).

Thiamine diphosphate-binding positions include His-79 and 120 to 122 (GHS). Asp-151 serves as a coordination point for Mg(2+). Residues 152–153 (GA), Asn-180, Tyr-287, and Glu-369 each bind thiamine diphosphate. A Mg(2+)-binding site is contributed by Asn-180.

The protein belongs to the transketolase family. DXPS subfamily. As to quaternary structure, homodimer. Mg(2+) is required as a cofactor. Thiamine diphosphate serves as cofactor.

It catalyses the reaction D-glyceraldehyde 3-phosphate + pyruvate + H(+) = 1-deoxy-D-xylulose 5-phosphate + CO2. It functions in the pathway metabolic intermediate biosynthesis; 1-deoxy-D-xylulose 5-phosphate biosynthesis; 1-deoxy-D-xylulose 5-phosphate from D-glyceraldehyde 3-phosphate and pyruvate: step 1/1. In terms of biological role, catalyzes the acyloin condensation reaction between C atoms 2 and 3 of pyruvate and glyceraldehyde 3-phosphate to yield 1-deoxy-D-xylulose-5-phosphate (DXP). The chain is 1-deoxy-D-xylulose-5-phosphate synthase from Thioalkalivibrio sulfidiphilus (strain HL-EbGR7).